The primary structure comprises 301 residues: (R)-2-haloacid dehalogenase (301 aa).

Belongs to the HAD-like hydrolase superfamily. S-2-haloalkanoic acid dehalogenase family. Homotetramer.

It carries out the reaction an (R)-2-haloacid + H2O = a (2S)-2-hydroxycarboxylate + a halide anion + H(+). In terms of biological role, catalyzes the hydrolytic dehalogenation of small (R)-2-haloalkanoic acids to yield the corresponding (S)-2-hydroxyalkanoic acids. Acts on acids of short chain lengths, C(2) to C(4), with inversion of configuration at C-2. The sequence is that of (R)-2-haloacid dehalogenase (hadD) from Pseudomonas putida (Arthrobacter siderocapsulatus).